Reading from the N-terminus, the 333-residue chain is Ornithine carbamoyltransferase (333 aa).

Carbamoyl phosphate is bound by residues 56-59 (STRT), Arg-107, and 134-137 (HPTQ). Residues Asn-167, Asp-231, and 235–236 (SM) contribute to the L-ornithine site. Residues 273–274 (CL) and Arg-318 contribute to the carbamoyl phosphate site.

It belongs to the aspartate/ornithine carbamoyltransferase superfamily. OTCase family.

The protein localises to the cytoplasm. It catalyses the reaction carbamoyl phosphate + L-ornithine = L-citrulline + phosphate + H(+). The protein operates within amino-acid degradation; L-arginine degradation via ADI pathway; carbamoyl phosphate from L-arginine: step 2/2. In terms of biological role, reversibly catalyzes the transfer of the carbamoyl group from carbamoyl phosphate (CP) to the N(epsilon) atom of ornithine (ORN) to produce L-citrulline. In Clostridium botulinum (strain Langeland / NCTC 10281 / Type F), this protein is Ornithine carbamoyltransferase.